The chain runs to 147 residues: Large ribosomal subunit protein uL15 (147 aa).

The interval 1 to 57 (MKLHELKSAPKSRNHKAKVVGRGHGSGLGKTSGRGQKGQKARKSGRTRPGFEGGQTP) is disordered. The segment covering 10 to 21 (PKSRNHKAKVVG) has biased composition (basic residues). Over residues 22-36 (RGHGSGLGKTSGRGQ) the composition is skewed to gly residues. The span at 37–46 (KGQKARKSGR) shows a compositional bias: basic residues.

The protein belongs to the universal ribosomal protein uL15 family. Part of the 50S ribosomal subunit.

Functionally, binds to the 23S rRNA. The sequence is that of Large ribosomal subunit protein uL15 from Mycoplasmoides gallisepticum (strain R(low / passage 15 / clone 2)) (Mycoplasma gallisepticum).